The chain runs to 542 residues: Probable serine/threonine-protein kinase ndrB (542 aa).

The segment at 1-52 (MNVERKLESLSLQQQQQEEQQDESEQPNQGVEDEEEEEYDEEEYEEEEEDIN) is disordered. A compositionally biased stretch (low complexity) spans 9 to 18 (SLSLQQQQQE). The segment covering 19-51 (EQQDESEQPNQGVEDEEEEEYDEEEYEEEEEDI) has biased composition (acidic residues). Residues 130-437 (FESIRIIGRG…VEEIQSHPFF (308 aa)) form the Protein kinase domain. ATP is bound by residues 136–144 (IGRGAFGEV) and lysine 159. The Proton acceptor role is filled by aspartate 258. One can recognise an AGC-kinase C-terminal domain in the interval 438 to 510 (KGVDWRRLRE…RNFDAMRDAF (73 aa)). Residues 452-486 (IIPQLSSPTDTSNFDHYEEEQQPEPMQPVQSKSRR) form a disordered region. Residues 455-465 (QLSSPTDTSNF) are compositionally biased toward polar residues.

It belongs to the protein kinase superfamily. AGC Ser/Thr protein kinase family.

Its subcellular location is the cytoplasm. It catalyses the reaction L-seryl-[protein] + ATP = O-phospho-L-seryl-[protein] + ADP + H(+). It carries out the reaction L-threonyl-[protein] + ATP = O-phospho-L-threonyl-[protein] + ADP + H(+). This chain is Probable serine/threonine-protein kinase ndrB (ndrB), found in Dictyostelium discoideum (Social amoeba).